The sequence spans 22 residues: Mu-conotoxin SxIIIC (22 aa).

3 cysteine pairs are disulfide-bonded: cysteine 3/cysteine 15, cysteine 4/cysteine 21, and cysteine 10/cysteine 22. Cysteine 22 carries the post-translational modification Cysteine amide.

Belongs to the conotoxin M superfamily. In terms of tissue distribution, expressed by the venom duct.

The protein resides in the secreted. In terms of biological role, mu-conotoxins block voltage-gated sodium channels (Nav). This toxin potently inhibits hNav1.4/SCN4A (IC(50)=15.11 nM). It also displays lower activities on other human subtypes (Nav1.1/SCN1A; IC(50)=132 nM, Nav1.2/SCN2A; IC(50)=363.8, Nav1.3/SCN3A; IC(50)=89.4, Nav1.6/SCN3A; IC(50)=124.9, Nav1.7/SCN7A; IC(50)=152.2). At Nav1.7/SCN9A, it does not elicit change in channel voltage-dependence of fast inactivation or activation, suggesting it acts as a pore blocker. Interestingly, it blocks current inhibition in an irreversible manner (tested during 35 minutes). The sequence is that of Mu-conotoxin SxIIIC from Conus striolatus (Cone snail).